We begin with the raw amino-acid sequence, 46 residues long: MALRSIKSIAGSCLCSRQRRCGSSAAIFPEGIFRCLSPKFGQEFPE.

As to quaternary structure, interacts with histone H2B. Also interacts with chromatin-binding proteins HMGN1 and HMGN3.

It is found in the nucleus. Its subcellular location is the cytoplasm. Functionally, plays a role in transcription regulation. The sequence is that of Transcriptional regulator SEHBP from Homo sapiens (Human).